The sequence spans 658 residues: MTQLAIGEATPHGATYDGHGVNFTLFSAHAERVELCVFDSRGNERRYDLPGRRGDVWHGYLAGARPGLRYGYRVHGPWQPAQGHRFNPVKLLLDPYARRVEGELKDHPLLHGGHDEPDYRDNAAVAPKSVVISDHYDWEDDAAPRTPWGKTVIYEAHVKGLTYLHPELPQEIRGTYKALGHPVMVAYFKQLGITALELLPVAQFASEPRLQRMGLTNYWGYNPMAMFALHPAWASSPEMALDEFRDAVKALHRAGIEVILDIVLNHSAELDLDGPTFSLRGIDNRSYYWIRDDGDYHNWTGCGNTLNLSHPGVVEYACECLRYWVETCHVDGFRFDLASVMGRTPTFRQDAPLFAAIKACPVLSTVKLIAEPWDIGEGGYQVGNFPPPFAEWNDHFRDAARRFWLPRNLTTGEFACRFAASSDVFKRNGRAPGASVNLLTAHDGFTLRDCVCFNQKHNEANGEENRDGTNSNYSDNHGKEGLGGPLDLMERRRDSIHALLATLLLSQGTPMLLAGDEHGHSQHGNNNAYCQDNALTWLDWQQANRGLTTFTAALIRLRQQIPALTGNSWWEEGDGNVRWLNKNAQPLSADEWQNGPKLMQILLSDRFLIAINATLEVTDIVLPEGEWRAVPPFAGEDNPVITAVWQGPAHGLCVFQRG.

The Nucleophile role is filled by Asp336. Catalysis depends on Glu371, which acts as the Proton donor. Positions 459 to 484 (EANGEENRDGTNSNYSDNHGKEGLGG) are disordered.

It belongs to the glycosyl hydrolase 13 family.

The catalysed reaction is Hydrolysis of (1-&gt;6)-alpha-D-glucosidic linkages to branches with degrees of polymerization of three or four glucose residues in limit dextrin.. It participates in glycan degradation; glycogen degradation. Removes maltotriose and maltotetraose chains that are attached by 1,6-alpha-linkage to the limit dextrin main chain, generating a debranched limit dextrin. The sequence is that of Glycogen debranching enzyme from Salmonella enteritidis PT4 (strain P125109).